The following is a 154-amino-acid chain: AP-1 complex subunit sigma-3 (154 aa).

It belongs to the adaptor complexes small subunit family. In terms of assembly, adaptor protein complex 1 (AP-1) is a heterotetramer composed of two large adaptins (gamma-type subunit AP1G1 and beta-type subunit AP1B1), a medium adaptin (mu-type subunit AP1M1 or AP1M2) and a small adaptin (sigma-type subunit AP1S1 or AP1S2 or AP1S3).

It is found in the golgi apparatus. The protein resides in the cytoplasmic vesicle membrane. It localises to the membrane. Its subcellular location is the clathrin-coated pit. In terms of biological role, subunit of clathrin-associated adaptor protein complex 1 that plays a role in protein sorting in the late-Golgi/trans-Golgi network (TGN) and/or endosomes. The AP complexes mediate both the recruitment of clathrin to membranes and the recognition of sorting signals within the cytosolic tails of transmembrane cargo molecules. Involved in TLR3 trafficking. The protein is AP-1 complex subunit sigma-3 (Ap1s3) of Mus musculus (Mouse).